The primary structure comprises 79 residues: Small ribosomal subunit protein bS21 (79 aa).

The segment at 59–79 is disordered; it reads RKKMQREGLLPMKPKPVVGVR.

It belongs to the bacterial ribosomal protein bS21 family.

This is Small ribosomal subunit protein bS21 from Methylocella silvestris (strain DSM 15510 / CIP 108128 / LMG 27833 / NCIMB 13906 / BL2).